The primary structure comprises 204 residues: Large ribosomal subunit protein uL22c (204 aa).

Belongs to the universal ribosomal protein uL22 family. As to quaternary structure, part of the 50S ribosomal subunit.

It is found in the plastid. The protein resides in the chloroplast. This protein binds specifically to 23S rRNA. In terms of biological role, the globular domain of the protein is located near the polypeptide exit tunnel on the outside of the subunit, while an extended beta-hairpin is found that lines the wall of the exit tunnel in the center of the 70S ribosome. The polypeptide is Large ribosomal subunit protein uL22c (rpl22) (Pisum sativum (Garden pea)).